Consider the following 453-residue polypeptide: Ribulose bisphosphate carboxylase large chain (453 aa).

Positions 1–2 (MS) are excised as a propeptide. Position 3 is an N-acetylproline (Pro-3). Position 14 is an N6,N6,N6-trimethyllysine (Lys-14). Positions 123 and 173 each coordinate substrate. Lys-175 serves as the catalytic Proton acceptor. Lys-177 contacts substrate. Positions 201, 203, and 204 each coordinate Mg(2+). The residue at position 201 (Lys-201) is an N6-carboxylysine. The Proton acceptor role is filled by His-294. The substrate site is built by Arg-295, His-327, and Ser-379.

Belongs to the RuBisCO large chain family. Type I subfamily. As to quaternary structure, heterohexadecamer of 8 large chains and 8 small chains; disulfide-linked. The disulfide link is formed within the large subunit homodimers. Mg(2+) is required as a cofactor. The disulfide bond which can form in the large chain dimeric partners within the hexadecamer appears to be associated with oxidative stress and protein turnover.

It localises to the plastid. It is found in the chloroplast. It carries out the reaction 2 (2R)-3-phosphoglycerate + 2 H(+) = D-ribulose 1,5-bisphosphate + CO2 + H2O. The enzyme catalyses D-ribulose 1,5-bisphosphate + O2 = 2-phosphoglycolate + (2R)-3-phosphoglycerate + 2 H(+). Functionally, ruBisCO catalyzes two reactions: the carboxylation of D-ribulose 1,5-bisphosphate, the primary event in carbon dioxide fixation, as well as the oxidative fragmentation of the pentose substrate in the photorespiration process. Both reactions occur simultaneously and in competition at the same active site. The sequence is that of Ribulose bisphosphate carboxylase large chain from Rubia tinctorum (Madder).